The following is a 1288-amino-acid chain: 5-oxoprolinase (1288 aa).

A disordered region spans residues 1248–1270; sequence PGGGGYGDPEDPAPPPGSPPLFP. Residues 1259 to 1270 show a composition bias toward pro residues; that stretch reads PAPPPGSPPLFP. A Phosphoserine modification is found at serine 1265.

The protein belongs to the oxoprolinase family. In terms of assembly, homodimer. Expressed in testis, kidney and liver.

It is found in the cytoplasm. Its subcellular location is the cytosol. The enzyme catalyses 5-oxo-L-proline + ATP + 2 H2O = L-glutamate + ADP + phosphate + H(+). Its function is as follows. Catalyzes the cleavage of 5-oxo-L-proline to form L-glutamate coupled to the hydrolysis of ATP to ADP and inorganic phosphate. This chain is 5-oxoprolinase (Oplah), found in Rattus norvegicus (Rat).